The chain runs to 239 residues: LexA repressor (239 aa).

Residues 1 to 40 (MTEAATGPEGADPSRAARSLPGRPPGIRADSSGLTDRQRR) are disordered. The H-T-H motif DNA-binding region spans 58-78 (MREIGQAVGLSSTSSVAHQLM). Basic and acidic residues predominate over residues 89-100 (DPHRPRAYEVRG). The tract at residues 89 to 116 (DPHRPRAYEVRGSDQPSAQPADTSGKPA) is disordered. Residues S163 and K200 each act as for autocatalytic cleavage activity in the active site.

This sequence belongs to the peptidase S24 family. Homodimer.

It catalyses the reaction Hydrolysis of Ala-|-Gly bond in repressor LexA.. Functionally, represses a number of genes involved in the response to DNA damage (SOS response), including recA and lexA. In the presence of single-stranded DNA, RecA interacts with LexA causing an autocatalytic cleavage which disrupts the DNA-binding part of LexA, leading to derepression of the SOS regulon and eventually DNA repair. This chain is LexA repressor, found in Streptomyces clavuligerus.